The primary structure comprises 669 residues: UvrABC system protein B (669 aa).

The region spanning 26–414 (EGLEDGLAHQ…SGDVVEQVVR (389 aa)) is the Helicase ATP-binding domain. 39–46 (GVTGSGKT) provides a ligand contact to ATP. The short motif at 92–115 (YYDYYQPEAYVPSSDTFIEKDASV) is the Beta-hairpin element. One can recognise a Helicase C-terminal domain in the interval 431–597 (QVDDLLSEIR…GLNKKINDIL (167 aa)). The region spanning 629-664 (ESKIRELEAKMYQHAQDLEFEQAASVRDQVQALREQ) is the UVR domain.

The protein belongs to the UvrB family. Forms a heterotetramer with UvrA during the search for lesions. Interacts with UvrC in an incision complex.

The protein resides in the cytoplasm. In terms of biological role, the UvrABC repair system catalyzes the recognition and processing of DNA lesions. A damage recognition complex composed of 2 UvrA and 2 UvrB subunits scans DNA for abnormalities. Upon binding of the UvrA(2)B(2) complex to a putative damaged site, the DNA wraps around one UvrB monomer. DNA wrap is dependent on ATP binding by UvrB and probably causes local melting of the DNA helix, facilitating insertion of UvrB beta-hairpin between the DNA strands. Then UvrB probes one DNA strand for the presence of a lesion. If a lesion is found the UvrA subunits dissociate and the UvrB-DNA preincision complex is formed. This complex is subsequently bound by UvrC and the second UvrB is released. If no lesion is found, the DNA wraps around the other UvrB subunit that will check the other stand for damage. The protein is UvrABC system protein B of Photorhabdus laumondii subsp. laumondii (strain DSM 15139 / CIP 105565 / TT01) (Photorhabdus luminescens subsp. laumondii).